A 213-amino-acid polypeptide reads, in one-letter code: MQKKIFLLEDDYLLSESVKEFLEHLGYEVFCAFNGKEAYERLSVERFNLLLLDVQVPEMNSLELFKRIKNDFLISTPVIFITALQDNATLKNAFNLGASDYLKKPFDLDELEARIKRFFNDDPIEIMPNIFYHQNCLSVRGKKEILPPKTAQLLEYFLEHKGQIISSQALENNLWEQAIDDSTLRTYIKVLRKLLGKNCIETHKGVGYRFNPL.

The Response regulatory domain occupies 4–119 (KIFLLEDDYL…ELEARIKRFF (116 aa)). Aspartate 53 is subject to 4-aspartylphosphate. The ompR/PhoB-type DNA-binding region spans 121–212 (DDPIEIMPNI…HKGVGYRFNP (92 aa)).

In terms of processing, phosphorylated by CrdS.

Its function is as follows. Member of the two-component regulatory system CrdR/CrdS that induces the transcriptional induction of the copper resistance determinant CrdA. Upon phosphorylation by CrdS, functions as a transcriptional regulator by direct binding to promoter regions of target genes including the crdA promoter or nitric oxide-responsive gene promoters. The sequence is that of Transcriptional regulatory protein CrdR from Helicobacter pylori (strain ATCC 700392 / 26695) (Campylobacter pylori).